The following is a 343-amino-acid chain: General transcription and DNA repair factor IIH subunit TFB6 (343 aa).

Tyrosine 69 carries the post-translational modification Phosphotyrosine. Threonine 71 and threonine 84 each carry phosphothreonine. Residues serine 104, serine 105, serine 108, and serine 342 each carry the phosphoserine modification.

In terms of assembly, component of the general transcription factor TFIIH, composed of a 7-subunit TFIIH core complex composed of XPB/SSL2, XPD/RAD3, SSL1, TFB1, TFB2, TFB4 and TFB5 which is active in NER; the 3-subunit CTD-kinase module TFIIK composed of CCL1, KIN28, and TFB3 which is active in transcription; as well as TFB6 that regulates SSL2 association with the complex. Post-translationally, phosphorylation leads the dissociation of from SSL2.

The protein localises to the cytoplasm. It is found in the nucleus. Functionally, component of the general transcription and DNA repair factor IIH (TFIIH) core complex, which is involved in general and transcription-coupled nucleotide excision repair (NER) of damaged DNA and, when complexed to TFIIK, in RNA transcription by RNA polymerase II. In NER, TFIIH acts by opening DNA around the lesion to allow the excision of the damaged oligonucleotide and its replacement by a new DNA fragment. In transcription, TFIIH has an essential role in transcription initiation. When the pre-initiation complex (PIC) has been established, TFIIH is required for promoter opening and promoter escape. Phosphorylation of the C-terminal tail (CTD) of the largest subunit of RNA polymerase II by the kinase module TFIIK controls the initiation of transcription. TFB6 facilitates dissociation of the SSL2 helicase from TFIIH after transcription initiation. The polypeptide is General transcription and DNA repair factor IIH subunit TFB6 (Saccharomyces cerevisiae (strain ATCC 204508 / S288c) (Baker's yeast)).